Here is a 120-residue protein sequence, read N- to C-terminus: Large ribosomal subunit protein uL22 (120 aa).

Belongs to the universal ribosomal protein uL22 family. Part of the 50S ribosomal subunit.

Its function is as follows. This protein binds specifically to 23S rRNA; its binding is stimulated by other ribosomal proteins, e.g. L4, L17, and L20. It is important during the early stages of 50S assembly. It makes multiple contacts with different domains of the 23S rRNA in the assembled 50S subunit and ribosome. Functionally, the globular domain of the protein is located near the polypeptide exit tunnel on the outside of the subunit, while an extended beta-hairpin is found that lines the wall of the exit tunnel in the center of the 70S ribosome. The sequence is that of Large ribosomal subunit protein uL22 from Corynebacterium efficiens (strain DSM 44549 / YS-314 / AJ 12310 / JCM 11189 / NBRC 100395).